The primary structure comprises 140 residues: UPF0102 protein ACIAD1132 (140 aa).

This sequence belongs to the UPF0102 family.

This Acinetobacter baylyi (strain ATCC 33305 / BD413 / ADP1) protein is UPF0102 protein ACIAD1132.